A 120-amino-acid chain; its full sequence is Large ribosomal subunit protein uL18 (120 aa).

It belongs to the universal ribosomal protein uL18 family. Part of the 50S ribosomal subunit; part of the 5S rRNA/L5/L18/L25 subcomplex. Contacts the 5S and 23S rRNAs.

Its function is as follows. This is one of the proteins that bind and probably mediate the attachment of the 5S RNA into the large ribosomal subunit, where it forms part of the central protuberance. This chain is Large ribosomal subunit protein uL18, found in Bordetella bronchiseptica (strain ATCC BAA-588 / NCTC 13252 / RB50) (Alcaligenes bronchisepticus).